A 162-amino-acid chain; its full sequence is Caveolin-2 (162 aa).

Residues 1–86 (MGLETEKADV…FEISKYVMYK (86 aa)) are Cytoplasmic-facing. Tyr-19 carries the phosphotyrosine modification. Phosphoserine occurs at positions 20 and 36. The segment at residues 87 to 107 (FLTVFLAIPLAFVAGILFATL) is an intramembrane region (helical). The Cytoplasmic segment spans residues 108 to 162 (SCLHIWIIMPFVKTCLMVLPSVQTIWKSVTDVIIAPLCTSVGRSFSSISLQLSHD).

It belongs to the caveolin family. In terms of assembly, homodimer. Caveolin-1 and -2 colocalize and form a stable hetero-oligomeric complex.

The protein resides in the golgi apparatus membrane. It is found in the cell membrane. The protein localises to the membrane. It localises to the caveola. May act as a scaffolding protein within caveolar membranes. Interacts directly with G-protein alpha subunits and can functionally regulate their activity. Caveolin-2 may function as an accessory protein in conjunction with caveolin-1. This is Caveolin-2 (CAV2) from Microcebus murinus (Gray mouse lemur).